We begin with the raw amino-acid sequence, 207 residues long: Ribosomal RNA small subunit methyltransferase G (207 aa).

Residues Gly76, Gln81, 127-128 (VE), and Arg141 contribute to the S-adenosyl-L-methionine site.

Belongs to the methyltransferase superfamily. RNA methyltransferase RsmG family.

It localises to the cytoplasm. It carries out the reaction guanosine(527) in 16S rRNA + S-adenosyl-L-methionine = N(7)-methylguanosine(527) in 16S rRNA + S-adenosyl-L-homocysteine. In terms of biological role, specifically methylates the N7 position of guanine in position 527 of 16S rRNA. The polypeptide is Ribosomal RNA small subunit methyltransferase G (Neisseria gonorrhoeae (strain ATCC 700825 / FA 1090)).